Here is a 219-residue protein sequence, read N- to C-terminus: 2-hydroxy-3-keto-5-methylthiopentenyl-1-phosphate phosphatase (219 aa).

The protein belongs to the HAD-like hydrolase superfamily. MtnX family.

It carries out the reaction 2-hydroxy-5-methylsulfanyl-3-oxopent-1-enyl phosphate + H2O = 1,2-dihydroxy-5-(methylsulfanyl)pent-1-en-3-one + phosphate. It functions in the pathway amino-acid biosynthesis; L-methionine biosynthesis via salvage pathway; L-methionine from S-methyl-5-thio-alpha-D-ribose 1-phosphate: step 4/6. In terms of biological role, dephosphorylates 2-hydroxy-3-keto-5-methylthiopentenyl-1-phosphate (HK-MTPenyl-1-P) yielding 1,2-dihydroxy-3-keto-5-methylthiopentene (DHK-MTPene). The protein is 2-hydroxy-3-keto-5-methylthiopentenyl-1-phosphate phosphatase of Bacillus cytotoxicus (strain DSM 22905 / CIP 110041 / 391-98 / NVH 391-98).